Here is a 93-residue protein sequence, read N- to C-terminus: Aspartyl/glutamyl-tRNA(Asn/Gln) amidotransferase subunit C (93 aa).

This sequence belongs to the GatC family. In terms of assembly, heterotrimer of A, B and C subunits.

It carries out the reaction L-glutamyl-tRNA(Gln) + L-glutamine + ATP + H2O = L-glutaminyl-tRNA(Gln) + L-glutamate + ADP + phosphate + H(+). The catalysed reaction is L-aspartyl-tRNA(Asn) + L-glutamine + ATP + H2O = L-asparaginyl-tRNA(Asn) + L-glutamate + ADP + phosphate + 2 H(+). Allows the formation of correctly charged Asn-tRNA(Asn) or Gln-tRNA(Gln) through the transamidation of misacylated Asp-tRNA(Asn) or Glu-tRNA(Gln) in organisms which lack either or both of asparaginyl-tRNA or glutaminyl-tRNA synthetases. The reaction takes place in the presence of glutamine and ATP through an activated phospho-Asp-tRNA(Asn) or phospho-Glu-tRNA(Gln). The protein is Aspartyl/glutamyl-tRNA(Asn/Gln) amidotransferase subunit C of Helicobacter pylori (strain HPAG1).